Consider the following 271-residue polypeptide: uncharacterized protein (271 aa).

3 consecutive transmembrane segments (helical) span residues 11–33 (GWLALALVVVAFTYLCFTVLAPW), 172–194 (SINTGQVAALTGVQLAGSYLQLI), and 214–236 (FLSYGIQWISFGILAPIGLGYFA). Residues 245-271 (REKAGSPPPDKPMTVEQKLADRYGRRR) form a disordered region. A compositionally biased stretch (basic and acidic residues) spans 262–271 (KLADRYGRRR).

Belongs to the SURF1 family.

It localises to the cell membrane. This is an uncharacterized protein from Mycobacterium tuberculosis (strain CDC 1551 / Oshkosh).